The chain runs to 179 residues: Adaptation to cold protein A (179 aa).

The interval 133-179 (KATPAPKRSADDDFEDEDSDYADYSDDDDDEGEEEDGYYDHYDDEDR) is disordered. A compositionally biased stretch (acidic residues) spans 144-179 (DDFEDEDSDYADYSDDDDDEGEEEDGYYDHYDDEDR).

In terms of biological role, part of an operon involved in cold adaptation. The chain is Adaptation to cold protein A from Shewanella oneidensis (strain ATCC 700550 / JCM 31522 / CIP 106686 / LMG 19005 / NCIMB 14063 / MR-1).